We begin with the raw amino-acid sequence, 363 residues long: Protein LEG1 homolog (363 aa).

Residues 1 to 19 form the signal peptide; that stretch reads MQCVWTLSLLQLVALWANA. N-linked (GlcNAc...) asparagine glycans are attached at residues Asn-79, Asn-261, and Asn-292.

It belongs to the LEG1 family.

It is found in the secreted. Its function is as follows. May be involved in early liver development. The polypeptide is Protein LEG1 homolog (Oncorhynchus mykiss (Rainbow trout)).